Consider the following 391-residue polypeptide: Phosphoglycerate kinase (391 aa).

Residues 21 to 23 (DLN), arginine 36, 59 to 62 (HLGR), arginine 113, and arginine 146 contribute to the substrate site. Residues lysine 197, glutamate 319, and 345 to 348 (GGDT) contribute to the ATP site.

Belongs to the phosphoglycerate kinase family. As to quaternary structure, monomer.

Its subcellular location is the cytoplasm. The catalysed reaction is (2R)-3-phosphoglycerate + ATP = (2R)-3-phospho-glyceroyl phosphate + ADP. It participates in carbohydrate degradation; glycolysis; pyruvate from D-glyceraldehyde 3-phosphate: step 2/5. The protein is Phosphoglycerate kinase of Pseudoalteromonas atlantica (strain T6c / ATCC BAA-1087).